A 142-amino-acid polypeptide reads, in one-letter code: ATP synthase epsilon chain (142 aa).

The protein belongs to the ATPase epsilon chain family. F-type ATPases have 2 components, CF(1) - the catalytic core - and CF(0) - the membrane proton channel. CF(1) has five subunits: alpha(3), beta(3), gamma(1), delta(1), epsilon(1). CF(0) has three main subunits: a, b and c.

The protein localises to the cell inner membrane. Functionally, produces ATP from ADP in the presence of a proton gradient across the membrane. This chain is ATP synthase epsilon chain, found in Shewanella denitrificans (strain OS217 / ATCC BAA-1090 / DSM 15013).